A 561-amino-acid polypeptide reads, in one-letter code: Proline--tRNA ligase (561 aa).

It belongs to the class-II aminoacyl-tRNA synthetase family. ProS type 1 subfamily. In terms of assembly, homodimer.

It is found in the cytoplasm. The enzyme catalyses tRNA(Pro) + L-proline + ATP = L-prolyl-tRNA(Pro) + AMP + diphosphate. Its function is as follows. Catalyzes the attachment of proline to tRNA(Pro) in a two-step reaction: proline is first activated by ATP to form Pro-AMP and then transferred to the acceptor end of tRNA(Pro). As ProRS can inadvertently accommodate and process non-cognate amino acids such as alanine and cysteine, to avoid such errors it has two additional distinct editing activities against alanine. One activity is designated as 'pretransfer' editing and involves the tRNA(Pro)-independent hydrolysis of activated Ala-AMP. The other activity is designated 'posttransfer' editing and involves deacylation of mischarged Ala-tRNA(Pro). The misacylated Cys-tRNA(Pro) is not edited by ProRS. The polypeptide is Proline--tRNA ligase (Wigglesworthia glossinidia brevipalpis).